The primary structure comprises 230 residues: Orotidine 5'-phosphate decarboxylase (230 aa).

Residues Asp11, Lys34, 61 to 70 (DLKLHDIPNT), Thr117, Arg179, Gln188, Gly208, and Arg209 contribute to the substrate site. Lys63 functions as the Proton donor in the catalytic mechanism.

Belongs to the OMP decarboxylase family. Type 1 subfamily. As to quaternary structure, homodimer.

The enzyme catalyses orotidine 5'-phosphate + H(+) = UMP + CO2. The protein operates within pyrimidine metabolism; UMP biosynthesis via de novo pathway; UMP from orotate: step 2/2. Functionally, catalyzes the decarboxylation of orotidine 5'-monophosphate (OMP) to uridine 5'-monophosphate (UMP). This is Orotidine 5'-phosphate decarboxylase from Streptococcus sanguinis (strain SK36).